Consider the following 339-residue polypeptide: Arylacetonitrilase (339 aa).

A CN hydrolase domain is found at 5–290 (IRVAVTQAEP…EGIVYADLDL (286 aa)). The active-site Proton acceptor is the Glu45. Residue Lys126 is part of the active site. The active-site Nucleophile is the Cys167.

The protein belongs to the carbon-nitrogen hydrolase superfamily. Nitrilase family.

The enzyme catalyses a nitrile + 2 H2O = a carboxylate + NH4(+). It carries out the reaction 4-chlorophenylacetonitrile + 2 H2O = 4-chlorophenylacetate + NH4(+). Nitrilase that hydrolyzes preferentially phenylacetonitrile, (R,S)-mandelonitrile, and 3-indolylacetonitrile. This is Arylacetonitrilase from Fusarium vanettenii (strain ATCC MYA-4622 / CBS 123669 / FGSC 9596 / NRRL 45880 / 77-13-4) (Fusarium solani subsp. pisi).